The chain runs to 391 residues: Thyroid hormone receptor alpha-B (391 aa).

A modulating region spans residues 1–32 (MAQWPEKEEEEQPMFGEEYTGYIPSYLEKDEP). 2 NR C4-type zinc fingers span residues 33–53 (CVVCGDKATGYHYRCITCEGC) and 71–95 (CKYDCCCIIDKITRNQCQLCRFKKC). The segment at residues 33–100 (CVVCGDKATG…RFKKCIAVGM (68 aa)) is a DNA-binding region (nuclear receptor). An NR LBD domain is found at 143–388 (AEWELIRMVT…PPLFLEVFED (246 aa)).

This sequence belongs to the nuclear hormone receptor family. NR1 subfamily.

The protein localises to the nucleus. Functionally, high affinity receptor for triiodothyronine. This Paralichthys olivaceus (Bastard halibut) protein is Thyroid hormone receptor alpha-B (thra2).